The sequence spans 258 residues: UPF0246 protein plu0566 (258 aa).

This sequence belongs to the UPF0246 family.

This Photorhabdus laumondii subsp. laumondii (strain DSM 15139 / CIP 105565 / TT01) (Photorhabdus luminescens subsp. laumondii) protein is UPF0246 protein plu0566.